We begin with the raw amino-acid sequence, 337 residues long: Pentalenene synthase (337 aa).

Mg(2+) contacts are provided by D80 and D84. The DDXXD motif motif lies at 80-84; the sequence is DDLFD. C128 and C136 form a disulfide bridge. Mg(2+) contacts are provided by N219, S223, and E227.

It belongs to the terpene synthase family. In terms of assembly, monomer. Mg(2+) serves as cofactor.

The enzyme catalyses (2E,6E)-farnesyl diphosphate = pentalenene + diphosphate. Its pathway is sesquiterpene biosynthesis; pentalenene biosynthesis; pentalenene from farnesyl diphosphate: step 1/1. The protein operates within antibiotic biosynthesis; pentalenolactone biosynthesis. Functionally, catalyzes the cyclization of farnesyl diphosphate (FPP) to the tricyclic sesquiterpene pentalenene, which is the hydrocarbon precursor of the pentalenolactone family of antibiotics produced by a variety of Streptomyces species. The protein is Pentalenene synthase (penA) of Streptomyces exfoliatus (Streptomyces hydrogenans).